The primary structure comprises 490 residues: Putative alanine aminotransferase (490 aa).

Positions 157, 158, 183, 239, and 308 each coordinate pyridoxal 5'-phosphate. Lysine 311 bears the N6-(pyridoxal phosphate)lysine mark. Position 320 (arginine 320) interacts with pyridoxal 5'-phosphate.

It belongs to the class-I pyridoxal-phosphate-dependent aminotransferase family. Alanine aminotransferase subfamily. Homodimer. Requires pyridoxal 5'-phosphate as cofactor.

The protein localises to the cytoplasm. It is found in the mitochondrion. The enzyme catalyses L-alanine + 2-oxoglutarate = pyruvate + L-glutamate. The protein operates within amino-acid degradation; L-alanine degradation via transaminase pathway; pyruvate from L-alanine: step 1/1. Its function is as follows. Alanine aminotransferase involved in both alanine biosynthesis and utilization. The sequence is that of Putative alanine aminotransferase (alt1) from Schizosaccharomyces pombe (strain 972 / ATCC 24843) (Fission yeast).